We begin with the raw amino-acid sequence, 257 residues long: MLVVLSPAKTLDVETPAPVTAFSQADLLDDSQLLINRCNQLSMQDIASLMKVSDKIAGLNVARFSQWHRPFVLNNAKQALFAFQGDVYTGLQAESLSLEAINYAQMHLRILSGLYGLLRPLDLMQAYRLEMGTKLENVRGANLYQFWGSLITQRLNKALAAQGDNLLINLASNEYFKAVKIKELNGLIITPVFKDQKNGQYKVISFYAKKARGLMTRYIIEQQVTALDKLKEFDSAGYYFVESASSATELVFYRDEM.

The protein belongs to the UPF0246 family.

This is UPF0246 protein Ping_3037 from Psychromonas ingrahamii (strain DSM 17664 / CCUG 51855 / 37).